Reading from the N-terminus, the 497-residue chain is Inactive metallocarboxypeptidase ecm14 (497 aa).

An N-terminal signal peptide occupies residues 1-28 (MAYNKSLKSLVFILLASQIVFVLFLCYG). The propeptide occupies 29-148 (KSSRELGVKW…TLFESIVPDT (120 aa)). A Peptidase M14 domain is found at 182–492 (SYQNLESINS…AMILYYGEFI (311 aa)). Residues H248 and E251 each coordinate Zn(2+). Substrate is bound by residues 248 to 251 (HARE) and 323 to 324 (DA). C317 and C337 are oxidised to a cystine. H377 is a binding site for Zn(2+). 378-379 (SY) contributes to the substrate binding site.

It belongs to the peptidase M14 family. It depends on Zn(2+) as a cofactor.

The protein localises to the endoplasmic reticulum. It localises to the secreted. Its function is as follows. Inactive carboxypeptidase that may play a role in cell wall organization and biogenesis. The polypeptide is Inactive metallocarboxypeptidase ecm14 (Schizosaccharomyces pombe (strain 972 / ATCC 24843) (Fission yeast)).